The sequence spans 364 residues: DNA replication and repair protein RecF (364 aa).

30 to 37 (GENAQGKT) provides a ligand contact to ATP.

Belongs to the RecF family.

It localises to the cytoplasm. Functionally, the RecF protein is involved in DNA metabolism; it is required for DNA replication and normal SOS inducibility. RecF binds preferentially to single-stranded, linear DNA. It also seems to bind ATP. The chain is DNA replication and repair protein RecF from Streptococcus suis (strain 98HAH33).